The following is a 567-amino-acid chain: PCNA-interacting partner (567 aa).

A disordered region spans residues Ile-485–Asn-552. 2 stretches are compositionally biased toward polar residues: residues Asp-512–Glu-524 and Leu-534–Asn-552.

It belongs to the PARI family.

It is found in the cytoplasm. Its subcellular location is the nucleus. Its function is as follows. Required to suppress inappropriate homologous recombination, thereby playing a central role DNA repair and in the maintenance of genomic stability. The polypeptide is PCNA-interacting partner (parpbp) (Xenopus laevis (African clawed frog)).